Consider the following 915-residue polypeptide: Probable LRR receptor-like serine/threonine-protein kinase At2g16250 (915 aa).

An N-terminal signal peptide occupies residues 1–28 (MVDQRRSALGFVLLLLCLVLFFDCVVVG). Topologically, residues 29 to 451 (QTQSRFSEKL…ISRRTVIILA (423 aa)) are extracellular. N-linked (GlcNAc...) asparagine glycans are attached at residues Asn-71, Asn-78, Asn-101, Asn-109, Asn-150, Asn-158, and Asn-177. 11 LRR repeats span residues 102 to 125 (LTRL…WFGV), 127 to 150 (LLAL…TLGN), 151 to 174 (LTSL…SLGQ), 176 to 198 (LNLS…SFSS), 199 to 223 (LKNL…LGAL), 225 to 247 (KLIH…LGDL), 248 to 271 (VNLV…LRKL), 272 to 295 (SKLQ…LFSA), 297 to 320 (SQLQ…CWSL), 321 to 344 (PKLR…SYDS), and 366 to 390 (LRRF…VTGE). A glycan (N-linked (GlcNAc...) asparagine) is linked at Asn-230. Asn-332 carries an N-linked (GlcNAc...) asparagine glycan. Asn-391, Asn-429, and Asn-437 each carry an N-linked (GlcNAc...) asparagine glycan. Residues 452–472 (AVGGGVAFILLFVILPIILVL) traverse the membrane as a helical segment. At 473–915 (CMRHRRRAAQ…AAYGVVEDNL (443 aa)) the chain is on the cytoplasmic side. A disordered region spans residues 482–503 (QRGNNDRPKPAGEASQQPPKGA). One can recognise a Protein kinase domain in the interval 527–811 (FNDANLIKRG…IVNALENPLK (285 aa)). ATP-binding positions include 533–541 (IKRGHSGNL) and Lys-555. Asp-657 (proton acceptor) is an active-site residue. The disordered stretch occupies residues 851–915 (TAVQAGATTS…AAYGVVEDNL (65 aa)). Gly residues predominate over residues 859–870 (TSGGGGGGGGNG). Residues 871–892 (LRNSGSQGSSGRNNNNNGNSSS) show a composition bias toward low complexity.

Belongs to the protein kinase superfamily. Ser/Thr protein kinase family.

Its subcellular location is the membrane. The catalysed reaction is L-seryl-[protein] + ATP = O-phospho-L-seryl-[protein] + ADP + H(+). It carries out the reaction L-threonyl-[protein] + ATP = O-phospho-L-threonyl-[protein] + ADP + H(+). This Arabidopsis thaliana (Mouse-ear cress) protein is Probable LRR receptor-like serine/threonine-protein kinase At2g16250.